We begin with the raw amino-acid sequence, 101 residues long: Large ribosomal subunit protein uL24 (101 aa).

Belongs to the universal ribosomal protein uL24 family. In terms of assembly, part of the 50S ribosomal subunit.

Its function is as follows. One of two assembly initiator proteins, it binds directly to the 5'-end of the 23S rRNA, where it nucleates assembly of the 50S subunit. In terms of biological role, one of the proteins that surrounds the polypeptide exit tunnel on the outside of the subunit. The chain is Large ribosomal subunit protein uL24 from Streptococcus gordonii (strain Challis / ATCC 35105 / BCRC 15272 / CH1 / DL1 / V288).